Reading from the N-terminus, the 194-residue chain is Protein GrpE (194 aa).

Residues 1–14 (MSKMNPNEKKENAS) show a composition bias toward basic and acidic residues. A disordered region spans residues 1–48 (MSKMNPNEKKENASKNENVNNEEATNLQEEQSNAADEAAGSDNVSGEV). Over residues 24 to 34 (ATNLQEEQSNA) the composition is skewed to polar residues.

It belongs to the GrpE family. As to quaternary structure, homodimer.

The protein localises to the cytoplasm. Its function is as follows. Participates actively in the response to hyperosmotic and heat shock by preventing the aggregation of stress-denatured proteins, in association with DnaK and GrpE. It is the nucleotide exchange factor for DnaK and may function as a thermosensor. Unfolded proteins bind initially to DnaJ; upon interaction with the DnaJ-bound protein, DnaK hydrolyzes its bound ATP, resulting in the formation of a stable complex. GrpE releases ADP from DnaK; ATP binding to DnaK triggers the release of the substrate protein, thus completing the reaction cycle. Several rounds of ATP-dependent interactions between DnaJ, DnaK and GrpE are required for fully efficient folding. The sequence is that of Protein GrpE from Parabacteroides distasonis (strain ATCC 8503 / DSM 20701 / CIP 104284 / JCM 5825 / NCTC 11152).